Consider the following 274-residue polypeptide: Undecaprenyl-diphosphatase 1 (274 aa).

Helical transmembrane passes span 47-67, 85-105, 113-133, 150-170, 196-216, 225-245, and 253-273; these read QVFL…LYFN, VSMW…GIPF, FYNY…FIMI, ITYT…VFPG, FFLA…KFGL, ILFI…KFLM, and FKAF…YFLI.

It belongs to the UppP family.

The protein resides in the cell membrane. The catalysed reaction is di-trans,octa-cis-undecaprenyl diphosphate + H2O = di-trans,octa-cis-undecaprenyl phosphate + phosphate + H(+). Functionally, catalyzes the dephosphorylation of undecaprenyl diphosphate (UPP). Confers resistance to bacitracin. In Clostridium acetobutylicum (strain ATCC 824 / DSM 792 / JCM 1419 / IAM 19013 / LMG 5710 / NBRC 13948 / NRRL B-527 / VKM B-1787 / 2291 / W), this protein is Undecaprenyl-diphosphatase 1.